The primary structure comprises 349 residues: MEKGINQRKTEHIRLCLTGNVEGVNKSTGLEGINFIHNALPEIDFADISLESSFLGKQLKAPFLVSSMTGGSELATKINQNLAIAAEEKGWALAIGSTRAFLESDQHKESFLIRNQAPTAPLIVNIGAVQLNYGYGPEECQRIIDKTNADSIVLHLNSLQEAVQDGGDLNFKDLLPKIEQVCKQVKAPVGVKEVGFGIDGEVARRLYDAGISYIDVAGAGGTSWSQVEKLRSKDPLNKAAAEAFNNWGTPTKDCLVSVRGELPEAPLVASGGMKTGVDAAKAITIGADVVGFARHLLKAAMETPEDVIRTMEQLELELKMTMFGIGAVNLEELKNTSRVSIMGQSLMDK.

Residue R8–K9 participates in substrate binding. FMN is bound by residues S66, S67–T69, S97, and N125. S97 to R99 is a substrate binding site. Q160 serves as a coordination point for substrate. E161 contacts Mg(2+). FMN is bound by residues K192, T222, G272 to K274, and A293 to R294.

This sequence belongs to the IPP isomerase type 2 family. In terms of assembly, homooctamer. Dimer of tetramers. FMN is required as a cofactor. NADPH serves as cofactor. Requires Mg(2+) as cofactor.

It localises to the cytoplasm. The enzyme catalyses isopentenyl diphosphate = dimethylallyl diphosphate. In terms of biological role, involved in the biosynthesis of isoprenoids. Catalyzes the 1,3-allylic rearrangement of the homoallylic substrate isopentenyl (IPP) to its allylic isomer, dimethylallyl diphosphate (DMAPP). The chain is Isopentenyl-diphosphate delta-isomerase from Oceanobacillus iheyensis (strain DSM 14371 / CIP 107618 / JCM 11309 / KCTC 3954 / HTE831).